The primary structure comprises 571 residues: Proline--tRNA ligase (571 aa).

Belongs to the class-II aminoacyl-tRNA synthetase family. ProS type 1 subfamily. As to quaternary structure, homodimer.

It is found in the cytoplasm. The enzyme catalyses tRNA(Pro) + L-proline + ATP = L-prolyl-tRNA(Pro) + AMP + diphosphate. Catalyzes the attachment of proline to tRNA(Pro) in a two-step reaction: proline is first activated by ATP to form Pro-AMP and then transferred to the acceptor end of tRNA(Pro). As ProRS can inadvertently accommodate and process non-cognate amino acids such as alanine and cysteine, to avoid such errors it has two additional distinct editing activities against alanine. One activity is designated as 'pretransfer' editing and involves the tRNA(Pro)-independent hydrolysis of activated Ala-AMP. The other activity is designated 'posttransfer' editing and involves deacylation of mischarged Ala-tRNA(Pro). The misacylated Cys-tRNA(Pro) is not edited by ProRS. In Pseudomonas syringae pv. syringae (strain B728a), this protein is Proline--tRNA ligase.